The chain runs to 615 residues: Increased rDNA silencing protein 4 (615 aa).

Disordered stretches follow at residues 38–135 (SNEV…SSHS), 152–260 (LLGI…NRSQ), 277–304 (PSIA…NYSS), and 323–445 (KPKH…NEDK). A compositionally biased stretch (polar residues) spans 50–65 (VSRNPQTRLSEPSLQK). Low complexity-rich tracts occupy residues 121 to 135 (HSQS…SSHS) and 157 to 168 (SRSSSRNGSNES). Serine 180 carries the phosphoserine modification. A compositionally biased stretch (low complexity) spans 184 to 198 (LLTSFSSGRRLSSSS). A compositionally biased stretch (polar residues) spans 248–260 (NPDTSDVISNRSQ). Residues 281-290 (SSNTTTTTSN) are compositionally biased toward low complexity. Residues 365–377 (ENDHASSLHEGNL) show a composition bias toward basic and acidic residues. Acidic residues predominate over residues 389 to 402 (DVYDDTDSDSESDQ). A compositionally biased stretch (basic residues) spans 409–438 (KPRKRDRIKRKIRNSANKTAHHRPIHRTRD). The 112-residue stretch at 460–571 (ERKRYESMWV…QCVWDSVDRY (112 aa)) folds into the EH domain.

It belongs to the IRS4 family. In terms of assembly, interacts with INP51.

In terms of biological role, with TAX4, acts as a positive regulator of INP51 activity and phosphatidylinositol 4,5-bisphosphate turnover. Negatively regulates signaling through the cell integrity pathway, including the MAP kinase SLT2. Also seems to be involved in rDNA silencing. In Saccharomyces cerevisiae (strain ATCC 204508 / S288c) (Baker's yeast), this protein is Increased rDNA silencing protein 4 (IRS4).